The chain runs to 482 residues: Glutamate--tRNA ligase (482 aa).

The 'HIGH' region signature appears at 9–19 (PSPTGYLHIGG). The 'KMSKS' region motif lies at 252–256 (KLSKR). Lysine 255 contacts ATP.

Belongs to the class-I aminoacyl-tRNA synthetase family. Glutamate--tRNA ligase type 1 subfamily. In terms of assembly, monomer.

The protein resides in the cytoplasm. The catalysed reaction is tRNA(Glu) + L-glutamate + ATP = L-glutamyl-tRNA(Glu) + AMP + diphosphate. Functionally, catalyzes the attachment of glutamate to tRNA(Glu) in a two-step reaction: glutamate is first activated by ATP to form Glu-AMP and then transferred to the acceptor end of tRNA(Glu). In Ureaplasma parvum serovar 3 (strain ATCC 27815 / 27 / NCTC 11736), this protein is Glutamate--tRNA ligase.